Consider the following 175-residue polypeptide: Mitochondrial inner membrane protease subunit 2 (175 aa).

A helical transmembrane segment spans residues 19–37; it reads FFVAVPVAVTFLDRVACVA. Active-site residues include serine 43 and lysine 91.

Belongs to the peptidase S26 family. IMP2 subfamily. As to quaternary structure, heterodimer of 2 subunits, IMMPL1 and IMMPL2. Expressed in all tissues tested except adult liver and lung.

Its subcellular location is the mitochondrion inner membrane. Catalyzes the removal of transit peptides required for the targeting of proteins from the mitochondrial matrix, across the inner membrane, into the inter-membrane space. Known to process the nuclear encoded protein DIABLO. In Homo sapiens (Human), this protein is Mitochondrial inner membrane protease subunit 2 (IMMP2L).